The chain runs to 1179 residues: Integrin alpha-7 (1179 aa).

Positions 1 to 33 (MARIPRCDFLRPPGIYYLITSLLAGLFLPPAIA) are cleaved as a signal peptide. At 34-1076 (FNLDVMGAIR…YLDPMAVVVE (1043 aa)) the chain is on the extracellular side. FG-GAP repeat units follow at residues 38–103 (VMGA…ETDC), 110–175 (RGAN…IRDE), 185–238 (EGRP…SPDL), 292–349 (DRLT…ATRL), 350–411 (IPEV…HWAD), 412–467 (ISPL…GVVV), and 471–530 (QVLE…IDPR). Residue asparagine 86 is glycosylated (N-linked (GlcNAc...) asparagine). 3 disulfide bridges follow: cysteine 94–cysteine 103, cysteine 140–cysteine 163, and cysteine 184–cysteine 197. Ca(2+) is bound by residues aspartate 372, asparagine 374, aspartate 376, aspartate 380, aspartate 434, asparagine 436, aspartate 438, aspartate 442, aspartate 492, aspartate 494, asparagine 496, tyrosine 498, and aspartate 500. 6 disulfides stabilise this stretch: cysteine 539-cysteine 546, cysteine 552-cysteine 615, cysteine 681-cysteine 687, cysteine 781-cysteine 792, cysteine 939-cysteine 993, and cysteine 999-cysteine 1004. N-linked (GlcNAc...) asparagine glycosylation is present at asparagine 784. The span at 952–961 (SRDRRRRELG) shows a compositional bias: basic and acidic residues. The interval 952-978 (SRDRRRRELGQPEPQEPPEKVEPSTSW) is disordered. N-linked (GlcNAc...) asparagine glycosylation occurs at asparagine 988. Residues asparagine 1023 and asparagine 1043 are each glycosylated (N-linked (GlcNAc...) asparagine). The helical transmembrane segment at 1077-1102 (GVPWWVILLGVLAGLLVLALLVLLLW) threads the bilayer. Residues 1103 to 1179 (KLGFFKRAKH…PDGHPVPATA (77 aa)) are Cytoplasmic-facing. The short motif at 1105-1109 (GFFKR) is the GFFKR motif element. Residues 1134 to 1153 (KEEKTGTIQRSNWGNSQWEG) are disordered. Over residues 1139–1152 (GTIQRSNWGNSQWE) the composition is skewed to polar residues. 3 consecutive repeat copies span residues 1155–1158 (DAHP), 1163–1166 (DWHP), and 1171–1174 (DGHP). The tract at residues 1155–1174 (DAHPILAADWHPELGPDGHP) is 3 X 4 AA repeats of D-X-H-P.

It belongs to the integrin alpha chain family. In terms of assembly, heterodimer of an alpha and a beta subunit. The alpha subunit is composed of a heavy and a light chain linked by a disulfide bond. Alpha-7 associates with beta-1. Interacts with COMP. Interacts (via C-terminus intracellular tail region) with CIB1; the interaction is stabilized/increased in a calcium- and magnesium-dependent manner. In terms of processing, ADP-ribosylated on at least two sites of the extracellular domain in skeletal myotubes (in vitro). No proteolytic cleavage to produce the 70 kDa form is seen due to the presence of a Gly instead of an arginine residue at position 647. As to expression, isoforms containing segment X2 are found in adult heart, lung and skeletal muscle. Isoforms containing segment X1 are expressed in adult heart, lung and in proliferating skeletal myoblasts but not in adult skeletal muscle. Isoforms containing segment a are exclusively found in skeletal muscle. Isoforms containing segment B are widely expressed. In muscle fibers isoforms containing segment A and B are expressed at myotendinous and neuromuscular junctions; isoforms containing segment C are expressed at neuromuscular junctions and at extrasynaptic sites.

It localises to the membrane. Its function is as follows. Integrin alpha-7/beta-1 is the primary laminin receptor on skeletal myoblasts and adult myofibers. During myogenic differentiation, it may induce changes in the shape and mobility of myoblasts, and facilitate their localization at laminin-rich sites of secondary fiber formation. Involved in the maintenance of the myofibers cytoarchitecture as well as for their anchorage, viability and functional integrity. Mice carrying a ITGA7 null allele are viable and fertile, but show progressive muscular dystrophy starting soon after birth, but with a distinct variability in different muscle types. Required to promote contractile phenotype acquisition in differentiated airway smooth muscle (ASM) cells. Acts as a Schwann cell receptor for laminin-2. Acts as a receptor of COMP and mediates its effect on vascular smooth muscle cells (VSMCs) maturation. In Mus musculus (Mouse), this protein is Integrin alpha-7 (Itga7).